The following is a 320-amino-acid chain: Homoserine kinase (320 aa).

100-110 lines the ATP pocket; the sequence is PLSSGMGSSAA.

It belongs to the GHMP kinase family. Homoserine kinase subfamily.

The protein resides in the cytoplasm. It carries out the reaction L-homoserine + ATP = O-phospho-L-homoserine + ADP + H(+). The protein operates within amino-acid biosynthesis; L-threonine biosynthesis; L-threonine from L-aspartate: step 4/5. Catalyzes the ATP-dependent phosphorylation of L-homoserine to L-homoserine phosphate. The sequence is that of Homoserine kinase from Chlorobium phaeobacteroides (strain BS1).